We begin with the raw amino-acid sequence, 339 residues long: D-erythrose-4-phosphate dehydrogenase (339 aa).

NAD(+)-binding positions include 12–13 and R81; that span reads RI. Substrate-binding positions include 154–156, R200, 213–214, and R236; these read SCT and TK. C155 acts as the Nucleophile in catalysis. N318 provides a ligand contact to NAD(+).

The protein belongs to the glyceraldehyde-3-phosphate dehydrogenase family. Epd subfamily. Homotetramer.

The protein resides in the cytoplasm. The enzyme catalyses D-erythrose 4-phosphate + NAD(+) + H2O = 4-phospho-D-erythronate + NADH + 2 H(+). The protein operates within cofactor biosynthesis; pyridoxine 5'-phosphate biosynthesis; pyridoxine 5'-phosphate from D-erythrose 4-phosphate: step 1/5. Functionally, catalyzes the NAD-dependent conversion of D-erythrose 4-phosphate to 4-phosphoerythronate. The sequence is that of D-erythrose-4-phosphate dehydrogenase from Escherichia coli (strain UTI89 / UPEC).